The sequence spans 497 residues: Zinc finger protein 3 (497 aa).

The segment covering 1 to 20 (MGTEKKEGLPKEETSEDSKP) has biased composition (basic and acidic residues). Positions 1–53 (MGTEKKEGLPKEETSEDSKPHGQTVEKLAQEVCHGHEFGEASEEDMSEGHLRE) are disordered. Glycyl lysine isopeptide (Lys-Gly) (interchain with G-Cter in SUMO2) cross-links involve residues Lys-6 and Lys-11. 13 consecutive C2H2-type zinc fingers follow at residues 136–158 (HTCK…MRVH), 164–186 (FECK…QRIH), 192–214 (FACT…HRIH), 220–242 (YKCE…QRIH), 248–270 (YECN…QRIH), 276–298 (HECS…QKIH), 304–326 (YLCN…QRIH), 332–354 (YECS…IRIH), 360–382 (YVCK…ERIH), 388–410 (YECF…QRIH), 416–438 (HQCN…QKIH), 444–466 (YECS…QRIH), and 472–494 (YECQ…QSVH).

The protein belongs to the krueppel C2H2-type zinc-finger protein family.

Its subcellular location is the nucleus. In terms of biological role, may be involved in transcriptional regulation. In Mus musculus (Mouse), this protein is Zinc finger protein 3 (Zfp3).